The sequence spans 661 residues: UvrABC system protein C (661 aa).

Residues 26 to 105 (AEPGCYLMRD…IKNHQPHFNV (80 aa)) enclose the GIY-YIG domain. The region spanning 215 to 250 (DELQNLLQEQMHKYADRTDYESAARVRDQLQGLDQL) is the UVR domain.

This sequence belongs to the UvrC family. Interacts with UvrB in an incision complex.

The protein localises to the cytoplasm. In terms of biological role, the UvrABC repair system catalyzes the recognition and processing of DNA lesions. UvrC both incises the 5' and 3' sides of the lesion. The N-terminal half is responsible for the 3' incision and the C-terminal half is responsible for the 5' incision. This chain is UvrABC system protein C, found in Synechococcus sp. (strain CC9902).